A 449-amino-acid chain; its full sequence is Doublesex- and mab-3-related transcription factor A2 (449 aa).

The DM DNA-binding region spans 57–104 (CARCRNHGVVSALKGHKRYCRWKDCMCAKCTLIAERQRVMAAQVALRR). A disordered region spans residues 163-259 (FPKTQLSGST…PSPSSAASRH (97 aa)). Over residues 166–187 (TQLSGSTTTQKSVGKPASTESD) the composition is skewed to polar residues. Over residues 230 to 240 (GSVSSLGSDSG) the composition is skewed to low complexity. Residues 260–295 (MNAIDILTRVFPSHKRSVLELVLQGCGKDVVQAIEQ) form the DMA domain.

This sequence belongs to the DMRT family. Expressed in brain and eye.

The protein resides in the nucleus. Its function is as follows. May be involved in sexual development. This Xiphophorus maculatus (Southern platyfish) protein is Doublesex- and mab-3-related transcription factor A2 (dmrta2).